Here is a 500-residue protein sequence, read N- to C-terminus: Plasma protease C1 inhibitor (500 aa).

The first 22 residues, methionine 1–serine 22, serve as a signal peptide directing secretion. Residues alanine 20–serine 31 are compositionally biased toward low complexity. Positions alanine 20–glycine 43 are disordered. The N-linked (GlcNAc...) (complex) asparagine glycan is linked to asparagine 25. O-linked (GalNAc...) threonine glycans are attached at residues threonine 47 and threonine 48. Serine 64 carries an O-linked (GalNAc...) serine glycan. A disordered region spans residues leucine 65 to threonine 118. A compositionally biased stretch (low complexity) spans threonine 67 to threonine 118. Asparagine 69 is a glycosylation site (N-linked (GlcNAc...) asparagine). O-linked (GalNAc...) threonine glycosylation is present at threonine 71. Asparagine 81 carries an N-linked (GlcNAc...) asparagine glycan. Residues threonine 83, threonine 88, threonine 92, and threonine 96 are each glycosylated (O-linked (GalNAc...) threonine). 7 tandem repeats follow at residues glutamate 85 to threonine 88, glutamine 89 to threonine 92, glutamate 93 to threonine 96, glutamine 97 to isoleucine 100, glutamine 101 to glutamine 104, proline 105 to glutamine 108, and glutamine 116 to threonine 119. Residues glutamate 85–threonine 119 are 7 X 4 AA tandem repeats of [QE]-P-T-[TQ]. Disulfide bonds link cysteine 123/cysteine 428 and cysteine 130/cysteine 205. 2 N-linked (GlcNAc...) (complex) asparagine glycosylation sites follow: asparagine 238 and asparagine 253. Asparagine 272 is a glycosylation site (N-linked (GlcNAc...) asparagine; in variant TA). Residue asparagine 352 is glycosylated (N-linked (GlcNAc...) (complex) asparagine).

This sequence belongs to the serpin family. In terms of assembly, interacts with MASP1. (Microbial infection) Binds to E.coli stcE which allows localization of SERPING1 to cell membranes thus protecting the bacteria against complement-mediated lysis. Highly glycosylated (49%) with N- and O-glycosylation. O-glycosylated with core 1 or possibly core 8 glycans. N-glycan heterogeneity at Asn-25: Hex5HexNAc4 (minor), dHex1Hex5HexNAc4 (minor), Hex6HexNAc5 (major) and dHex1Hex6HexNAc5 (minor). Post-translationally, cleaved by C1S in vitro. In terms of processing, (Microbial infection) Can be proteolytically cleaved by E.coli stcE.

Its subcellular location is the secreted. Its function is as follows. Serine protease inhibitor, which acrs as a regulator of the classical complement pathway. Forms a proteolytically inactive stoichiometric complex with the C1r or C1s proteases. May also regulate blood coagulation, fibrinolysis and the generation of kinins. Very efficient inhibitor of FXIIa. Inhibits chymotrypsin and kallikrein. This Homo sapiens (Human) protein is Plasma protease C1 inhibitor (SERPING1).